The chain runs to 331 residues: Ketol-acid reductoisomerase (NADP(+)) (331 aa).

A KARI N-terminal Rossmann domain is found at 2 to 182 (ARMYYDADAN…GGTRGGILET (181 aa)). NADP(+) is bound by residues 25 to 28 (YGSQ), Ser51, Ser53, and 83 to 86 (DDVQ). Residue His108 is part of the active site. Gly134 lines the NADP(+) pocket. In terms of domain architecture, KARI C-terminal knotted spans 183-328 (TFREETETDL…KDLRAMFSWL (146 aa)). Residues Asp191, Glu195, Glu227, and Glu231 each coordinate Mg(2+). Ser252 serves as a coordination point for substrate.

The protein belongs to the ketol-acid reductoisomerase family. The cofactor is Mg(2+).

The enzyme catalyses (2R)-2,3-dihydroxy-3-methylbutanoate + NADP(+) = (2S)-2-acetolactate + NADPH + H(+). It catalyses the reaction (2R,3R)-2,3-dihydroxy-3-methylpentanoate + NADP(+) = (S)-2-ethyl-2-hydroxy-3-oxobutanoate + NADPH + H(+). It functions in the pathway amino-acid biosynthesis; L-isoleucine biosynthesis; L-isoleucine from 2-oxobutanoate: step 2/4. The protein operates within amino-acid biosynthesis; L-valine biosynthesis; L-valine from pyruvate: step 2/4. In terms of biological role, involved in the biosynthesis of branched-chain amino acids (BCAA). Catalyzes an alkyl-migration followed by a ketol-acid reduction of (S)-2-acetolactate (S2AL) to yield (R)-2,3-dihydroxy-isovalerate. In the isomerase reaction, S2AL is rearranged via a Mg-dependent methyl migration to produce 3-hydroxy-3-methyl-2-ketobutyrate (HMKB). In the reductase reaction, this 2-ketoacid undergoes a metal-dependent reduction by NADPH to yield (R)-2,3-dihydroxy-isovalerate. In Picosynechococcus sp. (strain ATCC 27264 / PCC 7002 / PR-6) (Agmenellum quadruplicatum), this protein is Ketol-acid reductoisomerase (NADP(+)).